The chain runs to 281 residues: Pantothenate synthetase (281 aa).

31–38 (MGNLHAGH) is a binding site for ATP. The Proton donor role is filled by His38. (R)-pantoate is bound at residue Gln62. Gln62 is a binding site for beta-alanine. Position 150–153 (150–153 (GKKD)) interacts with ATP. Gln156 contacts (R)-pantoate. ATP-binding positions include Val179 and 187-190 (MSSR).

This sequence belongs to the pantothenate synthetase family. Homodimer.

The protein resides in the cytoplasm. The enzyme catalyses (R)-pantoate + beta-alanine + ATP = (R)-pantothenate + AMP + diphosphate + H(+). Its pathway is cofactor biosynthesis; (R)-pantothenate biosynthesis; (R)-pantothenate from (R)-pantoate and beta-alanine: step 1/1. Catalyzes the condensation of pantoate with beta-alanine in an ATP-dependent reaction via a pantoyl-adenylate intermediate. The sequence is that of Pantothenate synthetase from Xylella fastidiosa (strain M12).